Here is a 366-residue protein sequence, read N- to C-terminus: Anhydro-N-acetylmuramic acid kinase (366 aa).

10–17 serves as a coordination point for ATP; sequence GTSMDGID.

Belongs to the anhydro-N-acetylmuramic acid kinase family.

The enzyme catalyses 1,6-anhydro-N-acetyl-beta-muramate + ATP + H2O = N-acetyl-D-muramate 6-phosphate + ADP + H(+). It participates in amino-sugar metabolism; 1,6-anhydro-N-acetylmuramate degradation. Its pathway is cell wall biogenesis; peptidoglycan recycling. Catalyzes the specific phosphorylation of 1,6-anhydro-N-acetylmuramic acid (anhMurNAc) with the simultaneous cleavage of the 1,6-anhydro ring, generating MurNAc-6-P. Is required for the utilization of anhMurNAc either imported from the medium or derived from its own cell wall murein, and thus plays a role in cell wall recycling. The sequence is that of Anhydro-N-acetylmuramic acid kinase from Legionella pneumophila (strain Lens).